Reading from the N-terminus, the 125-residue chain is Large ribosomal subunit protein bL12 (125 aa).

The protein belongs to the bacterial ribosomal protein bL12 family. In terms of assembly, homodimer. Part of the ribosomal stalk of the 50S ribosomal subunit. Forms a multimeric L10(L12)X complex, where L10 forms an elongated spine to which 2 to 4 L12 dimers bind in a sequential fashion. Binds GTP-bound translation factors.

Its function is as follows. Forms part of the ribosomal stalk which helps the ribosome interact with GTP-bound translation factors. Is thus essential for accurate translation. In Thermoanaerobacter sp. (strain X514), this protein is Large ribosomal subunit protein bL12.